A 192-amino-acid polypeptide reads, in one-letter code: FMN-dependent NADH:quinone oxidoreductase 1 (192 aa).

FMN contacts are provided by residues Ser-9 and 15 to 17 (SYS).

Belongs to the azoreductase type 1 family. As to quaternary structure, homodimer. FMN is required as a cofactor.

It carries out the reaction 2 a quinone + NADH + H(+) = 2 a 1,4-benzosemiquinone + NAD(+). The catalysed reaction is N,N-dimethyl-1,4-phenylenediamine + anthranilate + 2 NAD(+) = 2-(4-dimethylaminophenyl)diazenylbenzoate + 2 NADH + 2 H(+). Quinone reductase that provides resistance to thiol-specific stress caused by electrophilic quinones. In terms of biological role, also exhibits azoreductase activity. Catalyzes the reductive cleavage of the azo bond in aromatic azo compounds to the corresponding amines. The protein is FMN-dependent NADH:quinone oxidoreductase 1 of Colwellia psychrerythraea (strain 34H / ATCC BAA-681) (Vibrio psychroerythus).